The chain runs to 293 residues: MPMISILCSLFPPLLFPSLLAAFGASIAAGIIGSYIVVKRIVSISGSIAHSILGGVGIALWLQYQFNLPISPLHGAIASAIFVAICIGNVHLKYHEREDSIISMIWSIGMAIGIICISKLPSFNSELSDFLFGNILWVTPQDLYFLGILDLFIVATVSICHTRFLALCFDEKYMALNHYSIKTWYLLLLILTAITTVVLMYVMGVILMLSMLVLPVSIACRFSYKMSHIIYIASILNIVCSFLGIMLAYLLDLPVGPVIAILMGGAYSLSLLLKRSYNASTPSPVSPESKINS.

7 helical membrane-spanning segments follow: residues 18–38 (SLLAAFGASIAAGIIGSYIVV), 41–61 (IVSISGSIAHSILGGVGIALW), 68–88 (LPISPLHGAIASAIFVAICIG), 101–121 (IISMIWSIGMAIGIICISKLP), 135–155 (ILWVTPQDLYFLGILDLFIVA), 187–207 (LLLILTAITTVVLMYVMGVIL), and 242–262 (FLGIMLAYLLDLPVGPVIAIL).

This sequence belongs to the ABC-3 integral membrane protein family.

The protein resides in the cell inner membrane. Its function is as follows. Part of an ATP-driven transport system CT_415/CT_416/CT_417 for a metal. The sequence is that of Probable metal transport system membrane protein CT_417 from Chlamydia trachomatis serovar D (strain ATCC VR-885 / DSM 19411 / UW-3/Cx).